The primary structure comprises 360 residues: Peptide chain release factor 1 (360 aa).

Gln-235 bears the N5-methylglutamine mark. Positions 285-313 (KRQQAEASTRRNLLGSGDRSDRNRTYNFP) are disordered.

Belongs to the prokaryotic/mitochondrial release factor family. Methylated by PrmC. Methylation increases the termination efficiency of RF1.

It is found in the cytoplasm. Functionally, peptide chain release factor 1 directs the termination of translation in response to the peptide chain termination codons UAG and UAA. This Enterobacter sp. (strain 638) protein is Peptide chain release factor 1.